Reading from the N-terminus, the 490-residue chain is GTPase Der (490 aa).

EngA-type G domains follow at residues 3-166 (PVVA…MEDL) and 203-376 (IKLA…DSST). GTP is bound by residues 9–16 (GRPNVGKS), 56–60 (DTGGI), 118–121 (NKTD), 209–216 (GRPNVGKS), 256–260 (DTAGV), and 321–324 (NKWD). A KH-like domain is found at 377–461 (RRVGTSMLTR…PIRIQFKEGE (85 aa)).

It belongs to the TRAFAC class TrmE-Era-EngA-EngB-Septin-like GTPase superfamily. EngA (Der) GTPase family. In terms of assembly, associates with the 50S ribosomal subunit.

Functionally, GTPase that plays an essential role in the late steps of ribosome biogenesis. The protein is GTPase Der of Escherichia coli O127:H6 (strain E2348/69 / EPEC).